Here is a 511-residue protein sequence, read N- to C-terminus: Probable DNA ligase (511 aa).

An ATP-binding site is contributed by glutamate 209. Lysine 211 functions as the N6-AMP-lysine intermediate in the catalytic mechanism. ATP-binding residues include arginine 216, arginine 231, glutamate 260, phenylalanine 299, arginine 371, and lysine 377.

Belongs to the ATP-dependent DNA ligase family. The cofactor is Mg(2+).

The enzyme catalyses ATP + (deoxyribonucleotide)n-3'-hydroxyl + 5'-phospho-(deoxyribonucleotide)m = (deoxyribonucleotide)n+m + AMP + diphosphate.. Its function is as follows. DNA ligase that seals nicks in double-stranded DNA during DNA replication, DNA recombination and DNA repair. In Mycolicibacterium gilvum (strain PYR-GCK) (Mycobacterium gilvum (strain PYR-GCK)), this protein is Probable DNA ligase.